We begin with the raw amino-acid sequence, 74 residues long: Large ribosomal subunit protein bL31 (74 aa).

The protein belongs to the bacterial ribosomal protein bL31 family. Type A subfamily. In terms of assembly, part of the 50S ribosomal subunit.

In terms of biological role, binds the 23S rRNA. This Xanthobacter autotrophicus (strain ATCC BAA-1158 / Py2) protein is Large ribosomal subunit protein bL31.